Consider the following 199-residue polypeptide: uncharacterized protein (199 aa).

This is an uncharacterized protein from Rhodococcus erythropolis (Arthrobacter picolinophilus).